Reading from the N-terminus, the 94-residue chain is Large ribosomal subunit protein bL28 (94 aa).

The protein belongs to the bacterial ribosomal protein bL28 family.

The protein is Large ribosomal subunit protein bL28 of Novosphingobium aromaticivorans (strain ATCC 700278 / DSM 12444 / CCUG 56034 / CIP 105152 / NBRC 16084 / F199).